Reading from the N-terminus, the 89-residue chain is Small ribosomal subunit protein uS15 (89 aa).

The disordered stretch occupies residues 1–24 (MSLNAEQKSEIVEQFRRSPSDTGS). Positions 7–19 (QKSEIVEQFRRSP) are enriched in basic and acidic residues.

It belongs to the universal ribosomal protein uS15 family. In terms of assembly, part of the 30S ribosomal subunit. Forms a bridge to the 50S subunit in the 70S ribosome, contacting the 23S rRNA.

Functionally, one of the primary rRNA binding proteins, it binds directly to 16S rRNA where it helps nucleate assembly of the platform of the 30S subunit by binding and bridging several RNA helices of the 16S rRNA. Its function is as follows. Forms an intersubunit bridge (bridge B4) with the 23S rRNA of the 50S subunit in the ribosome. The sequence is that of Small ribosomal subunit protein uS15 from Halorhodospira halophila (strain DSM 244 / SL1) (Ectothiorhodospira halophila (strain DSM 244 / SL1)).